The sequence spans 39 residues: Cytochrome b559 subunit beta (39 aa).

The chain crosses the membrane as a helical span at residues 14–30; the sequence is WLAVHGLAVPTVFFLGS. Position 18 (His18) interacts with heme.

The protein belongs to the PsbE/PsbF family. As to quaternary structure, heterodimer of an alpha subunit and a beta subunit. PSII is composed of 1 copy each of membrane proteins PsbA, PsbB, PsbC, PsbD, PsbE, PsbF, PsbH, PsbI, PsbJ, PsbK, PsbL, PsbM, PsbT, PsbX, PsbY, PsbZ, Psb30/Ycf12, at least 3 peripheral proteins of the oxygen-evolving complex and a large number of cofactors. It forms dimeric complexes. It depends on heme b as a cofactor.

The protein localises to the plastid. It localises to the chloroplast thylakoid membrane. Its function is as follows. This b-type cytochrome is tightly associated with the reaction center of photosystem II (PSII). PSII is a light-driven water:plastoquinone oxidoreductase that uses light energy to abstract electrons from H(2)O, generating O(2) and a proton gradient subsequently used for ATP formation. It consists of a core antenna complex that captures photons, and an electron transfer chain that converts photonic excitation into a charge separation. The protein is Cytochrome b559 subunit beta of Welwitschia mirabilis (Tree tumbo).